A 142-amino-acid polypeptide reads, in one-letter code: MFFGEFEYKLDEKGRFPLPPAIRPSLKDGLILAPGTGEKCIYAYPLCEWKKLAESLKSTTVAPSKMRRLNRALFALAFDVNLDAQGRLTLPAPLKTYAGVNIEVIVAGVNNYLEIWDKETWESEKKASQEQAWQIIETLEEH.

SpoVT-AbrB domains follow at residues 5–48 (EFEY…PLCE) and 77–120 (AFDV…DKET).

Belongs to the MraZ family. In terms of assembly, forms oligomers.

It localises to the cytoplasm. It is found in the nucleoid. This Dehalococcoides mccartyi (strain ATCC BAA-2100 / JCM 16839 / KCTC 5957 / BAV1) protein is Transcriptional regulator MraZ.